Here is a 1020-residue protein sequence, read N- to C-terminus: Carbamoyl phosphate synthase arginine-specific large chain (1020 aa).

The carboxyphosphate synthetic domain stretch occupies residues 1–401 (MPKNNAIHSI…ATLKAIASLE (401 aa)). Positions 129, 169, 175, 176, 208, 210, 215, 241, 242, 243, 284, and 298 each coordinate ATP. The ATP-grasp 1 domain maps to 133–327 (KTLMKRLHQP…IAKIAADIAI (195 aa)). The Mg(2+) site is built by Q284, E298, and N300. The Mn(2+) site is built by Q284, E298, and N300. Oligomerization domain regions lie at residues 402-542 (IDPK…FGQT) and 402-544 (IDPK…QTNE). Carbamoyl phosphate synthetic domain regions lie at residues 543 to 927 (NESH…ADSY) and 544 to 927 (ESHP…ADSY). The ATP-grasp 2 domain maps to 669-858 (ADCLRLLKIA…LAQLATRLIL (190 aa)). 9 residues coordinate ATP: R705, Q744, L746, E750, G775, V776, H777, S778, and Q818. Residues Q818 and N831 each coordinate Mg(2+). Residues Q818 and N831 each contribute to the Mn(2+) site. Positions 927 to 1020 (YHLETWQTVD…LAVTPTPATI (94 aa)) constitute an MGS-like domain. The allosteric domain stretch occupies residues 928–1020 (HLETWQTVDG…LAVTPTPATI (93 aa)).

This sequence belongs to the CarB family. In terms of assembly, composed of two chains; the small (or glutamine) chain promotes the hydrolysis of glutamine to ammonia, which is used by the large (or ammonia) chain to synthesize carbamoyl phosphate. Tetramer of heterodimers (alpha,beta)4. It depends on Mg(2+) as a cofactor. Mn(2+) is required as a cofactor.

It catalyses the reaction hydrogencarbonate + L-glutamine + 2 ATP + H2O = carbamoyl phosphate + L-glutamate + 2 ADP + phosphate + 2 H(+). The enzyme catalyses hydrogencarbonate + NH4(+) + 2 ATP = carbamoyl phosphate + 2 ADP + phosphate + 2 H(+). The protein operates within amino-acid biosynthesis; L-arginine biosynthesis; carbamoyl phosphate from bicarbonate: step 1/1. Its function is as follows. Large subunit of the glutamine-dependent carbamoyl phosphate synthetase (CPSase). CPSase catalyzes the formation of carbamoyl phosphate from the ammonia moiety of glutamine, carbonate, and phosphate donated by ATP, constituting the first step of the biosynthetic pathway leading to arginine and/or urea. The large subunit (synthetase) binds the substrates ammonia (free or transferred from glutamine from the small subunit), hydrogencarbonate and ATP and carries out an ATP-coupled ligase reaction, activating hydrogencarbonate by forming carboxy phosphate which reacts with ammonia to form carbamoyl phosphate. The protein is Carbamoyl phosphate synthase arginine-specific large chain of Lactiplantibacillus plantarum (strain ATCC BAA-793 / NCIMB 8826 / WCFS1) (Lactobacillus plantarum).